Reading from the N-terminus, the 96-residue chain is Neutrophil defensin 3 (96 aa).

An N-terminal signal peptide occupies residues 1 to 19; sequence MRTLVILAAILLVALQAQA. Residues 20-66 constitute a propeptide that is removed on maturation; the sequence is EPLQARTDEATAAQEQIPTDNPEVVVSLAWDESLAPKDSVPGLRKNM. 3 cysteine pairs are disulfide-bonded: C68/C96, C70/C85, and C75/C95.

The protein resides in the secreted. In terms of biological role, has bacteriostatic activity against Gram-positive bacteria S.aureus and L.monocytogenes and Gram-negative bacterium E.coli and antifungal activity against C.neoformans. This Macaca mulatta (Rhesus macaque) protein is Neutrophil defensin 3.